Here is a 308-residue protein sequence, read N- to C-terminus: Glutaminase (308 aa).

Residues Ser-66, Asn-117, Glu-161, Asn-168, Tyr-192, Tyr-244, and Val-262 each coordinate substrate.

This sequence belongs to the glutaminase family. As to quaternary structure, homotetramer.

It carries out the reaction L-glutamine + H2O = L-glutamate + NH4(+). The polypeptide is Glutaminase (Salmonella heidelberg (strain SL476)).